A 117-amino-acid chain; its full sequence is Putative phosphotransferase enzyme IIB component MG129 (117 aa).

The chain crosses the membrane as a helical span at residues 1–21; that stretch reads MKWLLWLGYIFSFGLLYLWIV. One can recognise a PTS EIIB type-1 domain in the interval 42-117; sequence PFKVKDFVSA…ELKKKIEDEQ (76 aa).

The protein resides in the membrane. The phosphoenolpyruvate-dependent sugar phosphotransferase system (PTS), a major carbohydrate active -transport system, catalyzes the phosphorylation of incoming sugar substrates concomitant with their translocation across the cell membrane. The sequence is that of Putative phosphotransferase enzyme IIB component MG129 from Mycoplasma genitalium (strain ATCC 33530 / DSM 19775 / NCTC 10195 / G37) (Mycoplasmoides genitalium).